A 501-amino-acid polypeptide reads, in one-letter code: Type II methyltransferase M.BsuBI (501 aa).

The protein belongs to the N(4)/N(6)-methyltransferase family.

It catalyses the reaction a 2'-deoxyadenosine in DNA + S-adenosyl-L-methionine = an N(6)-methyl-2'-deoxyadenosine in DNA + S-adenosyl-L-homocysteine + H(+). Functionally, a beta subtype methylase that recognizes the double-stranded sequence 5'-CTGCAG-3', methylates A-5 on both strands, and protects the DNA from cleavage by the BsuBI endonuclease. The protein is Type II methyltransferase M.BsuBI (hsdBM) of Bacillus subtilis.